Reading from the N-terminus, the 457-residue chain is Casein kinase 1-like protein 11 (457 aa).

One can recognise a Protein kinase domain in the interval 15–284 (FKLGRKLGSG…LRRLFRDLFI (270 aa)). ATP-binding positions include 21-29 (LGSGSFGEL) and lysine 44. Catalysis depends on aspartate 134, which acts as the Proton acceptor. 2 disordered regions span residues 305–337 (GSSS…GQDL) and 352–442 (NVSS…EDAI). A compositionally biased stretch (pro residues) spans 311–324 (RPTPRPALDPPGPP). 2 stretches are compositionally biased toward polar residues: residues 383–403 (NGST…SAEP) and 409–429 (SRLF…QSYE).

This sequence belongs to the protein kinase superfamily. CK1 Ser/Thr protein kinase family. Casein kinase I subfamily. As to quaternary structure, monomer. Post-translationally, autophosphorylated.

The protein resides in the cytoplasm. It is found in the nucleus. The enzyme catalyses L-seryl-[protein] + ATP = O-phospho-L-seryl-[protein] + ADP + H(+). It catalyses the reaction L-threonyl-[protein] + ATP = O-phospho-L-threonyl-[protein] + ADP + H(+). Its activity is regulated as follows. Partially inhibited by N-(2-aminoethyl)-5-chloroisoquinoline-8-sulfonamide (CKI-7). In terms of biological role, casein kinases are operationally defined by their preferential utilization of acidic proteins such as caseins as substrates. Can phosphorylate casein, phosvitin, myosin light chains and poly(Glu,Tyr) in vitro. The polypeptide is Casein kinase 1-like protein 11 (Arabidopsis thaliana (Mouse-ear cress)).